The sequence spans 181 residues: Mediator of RNA polymerase II transcription subunit 19 (181 aa).

The interval 120 to 181 (GMPGPGKPGI…TDGERRRKRK (62 aa)) is disordered. Residues 122-133 (PGPGKPGIGPQV) show a composition bias toward gly residues. Over residues 143–158 (RSYNTESARESSNNEE) the composition is skewed to polar residues.

Belongs to the Mediator complex subunit 19 family. As to quaternary structure, component of the Mediator complex.

The protein resides in the nucleus. Component of the Mediator complex, a coactivator involved in the regulated transcription of nearly all RNA polymerase II-dependent genes. Mediator functions as a bridge to convey information from gene-specific regulatory proteins to the basal RNA polymerase II transcription machinery. Mediator is recruited to promoters by direct interactions with regulatory proteins and serves as a scaffold for the assembly of a functional preinitiation complex with RNA polymerase II and the general transcription factors. The protein is Mediator of RNA polymerase II transcription subunit 19 (ROX3) of Yarrowia lipolytica (strain CLIB 122 / E 150) (Yeast).